Here is a 343-residue protein sequence, read N- to C-terminus: Heat-inducible transcription repressor HrcA (343 aa).

This sequence belongs to the HrcA family.

In terms of biological role, negative regulator of class I heat shock genes (grpE-dnaK-dnaJ and groELS operons). Prevents heat-shock induction of these operons. The polypeptide is Heat-inducible transcription repressor HrcA (Mycobacterium marinum (strain ATCC BAA-535 / M)).